A 465-amino-acid polypeptide reads, in one-letter code: 6-phospho-beta-glucosidase GmuD (465 aa).

The active-site Proton donor is E170. E368 (nucleophile) is an active-site residue.

Belongs to the glycosyl hydrolase 1 family.

It carries out the reaction 6-phospho-beta-D-glucosyl-(1-&gt;4)-D-glucose + H2O = D-glucose 6-phosphate + D-glucose. Functionally, phospho-beta-D-glucosidase that seems to be involved in the degradation of glucomannan. Is also capable of hydrolyzing aryl-phospho-beta-D-glucosides, although very weakly, and plays only a minor role, if any, in the degradation of these substrates in vivo. The chain is 6-phospho-beta-glucosidase GmuD (gmuD) from Bacillus subtilis (strain 168).